We begin with the raw amino-acid sequence, 507 residues long: Cuticlin-4 (507 aa).

The N-terminal stretch at 1–19 is a signal peptide; sequence MFHFTRILAAFLLPTLCFC. Residues 20 to 471 lie on the Extracellular side of the membrane; the sequence is GYSTAPSSTV…KTCFSTSRMY (452 aa). The 239-residue stretch at 42–280 folds into the ZP domain; sequence VCETASISLL…YGCSNTQPQC (239 aa). The disordered stretch occupies residues 292-350; sequence KTTETAEPYPYDSHESGYPTRPANYPVASSRYPIPTTQAPASYPSSPAPPPPGADIDNG. Residues asparagine 374 and asparagine 408 are each glycosylated (N-linked (GlcNAc...) asparagine). Residues 472-492 form a helical membrane-spanning segment; the sequence is FTLILLCLLFATTVVVFIVIV. The Cytoplasmic portion of the chain corresponds to 493–507; that stretch reads QKQRQILAQTAFFKP.

The protein resides in the cell membrane. Functionally, plays a role in alae formation and subsequent cuticle attachment in adults. This chain is Cuticlin-4, found in Caenorhabditis elegans.